The primary structure comprises 556 residues: MSKPETTAAPNFLRQIVQADLDAGKHAKIVTRFPPEPNGYLHIGHAKSICLNFGLAQEFAGDCHLRFDDTNPAKEDQEYIDAIEADIKWLGFQWSGEVCYASNYFDQLHAWAVELIKAGKAFVCDLGPEEMREYRGTLTEPGRNSPYRDRSVEENLDLFARMKAGEFPDGARSLRAKIDMGSPNMNLRDPILYRIRHAHHHQTGDKWCIYPSYDFTHGQSDAIEGITHSICTLEFEDHRPLYEWFLANLPVPAQPRQYEFSRLNLNYTVTSKRKLKQLVDEGHVSGWDDPRMSTLSGYRRRGYTPESIRNFCEMIGVNRASGVVDIGMLEFSIRDHLDATAPRAMCVLKPLKVVITNYPEGQVENLELPRHPKEDMGVRVLPFGRELFIDAGDFEEVPPAGYKRLIPGGEVRLRGSYVIRADEAIKDADGNIVELRCSYDPDTLGKNPEGRKVKGVIHWVPAEGSVECEVRLYDRLFRSANPEKAEEGGSFLDNINADSLQVLAGCRAEPSLGQANPEDRFQFEREGYFVADLKDSRPGKPVFNRTVTLRDSWGQG.

A 'HIGH' region motif is present at residues Pro35 to His45. ATP is bound by residues Glu36–Asn38 and His42–Ser48. L-glutamine contacts are provided by Asp68 and Tyr213. Residues Thr232 and Arg262–Leu263 each bind ATP. The short motif at Val269 to Arg273 is the 'KMSKS' region element.

The protein belongs to the class-I aminoacyl-tRNA synthetase family. Monomer.

The protein localises to the cytoplasm. The enzyme catalyses tRNA(Gln) + L-glutamine + ATP = L-glutaminyl-tRNA(Gln) + AMP + diphosphate. In Pseudomonas aeruginosa (strain ATCC 15692 / DSM 22644 / CIP 104116 / JCM 14847 / LMG 12228 / 1C / PRS 101 / PAO1), this protein is Glutamine--tRNA ligase.